The following is a 141-amino-acid chain: Large ribosomal subunit protein uL16 (141 aa).

The segment at 1–23 (MLMPKRTKYRKQMKGRNRGKAHR) is disordered.

This sequence belongs to the universal ribosomal protein uL16 family. In terms of assembly, part of the 50S ribosomal subunit.

Binds 23S rRNA and is also seen to make contacts with the A and possibly P site tRNAs. This Helicobacter acinonychis (strain Sheeba) protein is Large ribosomal subunit protein uL16.